The sequence spans 238 residues: Putative csd-like protein HI_1343 (238 aa).

N6-(pyridoxal phosphate)lysine is present on lysine 146.

This sequence belongs to the class-V pyridoxal-phosphate-dependent aminotransferase family. Csd subfamily.

The chain is Putative csd-like protein HI_1343 from Haemophilus influenzae (strain ATCC 51907 / DSM 11121 / KW20 / Rd).